We begin with the raw amino-acid sequence, 239 residues long: 1-(5-phosphoribosyl)-5-[(5-phosphoribosylamino)methylideneamino] imidazole-4-carboxamide isomerase (239 aa).

Asp-9 acts as the Proton acceptor in catalysis. Asp-131 acts as the Proton donor in catalysis.

It belongs to the HisA/HisF family.

Its subcellular location is the cytoplasm. It catalyses the reaction 1-(5-phospho-beta-D-ribosyl)-5-[(5-phospho-beta-D-ribosylamino)methylideneamino]imidazole-4-carboxamide = 5-[(5-phospho-1-deoxy-D-ribulos-1-ylimino)methylamino]-1-(5-phospho-beta-D-ribosyl)imidazole-4-carboxamide. Its pathway is amino-acid biosynthesis; L-histidine biosynthesis; L-histidine from 5-phospho-alpha-D-ribose 1-diphosphate: step 4/9. The polypeptide is 1-(5-phosphoribosyl)-5-[(5-phosphoribosylamino)methylideneamino] imidazole-4-carboxamide isomerase (Phocaeicola vulgatus (strain ATCC 8482 / DSM 1447 / JCM 5826 / CCUG 4940 / NBRC 14291 / NCTC 11154) (Bacteroides vulgatus)).